The sequence spans 201 residues: Aminoglycoside N(6')-acetyltransferase type 1 (201 aa).

The 168-residue stretch at 25-192 (VTLRLMTEHD…PAVYMVQTRQ (168 aa)) folds into the N-acetyltransferase domain. W51 and D154 together coordinate substrate. N159 lines the acetyl-CoA pocket.

As to quaternary structure, homodimer.

It carries out the reaction kanamycin B + acetyl-CoA = N(6')-acetylkanamycin B + CoA + H(+). In terms of biological role, catalyzes the transfer of an acetyl group from acetyl-CoA to the 6'-amino group of aminoglycoside molecules conferring resistance to antibiotics containing the purpurosamine ring including amikacin. This is Aminoglycoside N(6')-acetyltransferase type 1 (aacA4) from Klebsiella pneumoniae.